Consider the following 248-residue polypeptide: Ureidoacrylate amidohydrolase RutB (248 aa).

Residue D41 is the Proton acceptor of the active site. Residue K150 is part of the active site. C183 functions as the Nucleophile in the catalytic mechanism.

Belongs to the isochorismatase family. RutB subfamily.

It catalyses the reaction (Z)-3-ureidoacrylate + H2O + H(+) = (Z)-3-aminoacrylate + NH4(+) + CO2. The enzyme catalyses (Z)-3-ureidoacrylate + H2O = (Z)-3-aminoacrylate + carbamate + H(+). It carries out the reaction (Z)-2-methylureidoacrylate + H2O + H(+) = (Z)-2-methylaminoacrylate + NH4(+) + CO2. In terms of biological role, hydrolyzes ureidoacrylate to form aminoacrylate and carbamate. The carbamate hydrolyzes spontaneously, thereby releasing one of the nitrogen atoms of the pyrimidine ring as ammonia and one of its carbon atoms as CO2. The sequence is that of Ureidoacrylate amidohydrolase RutB from Methylorubrum extorquens (strain CM4 / NCIMB 13688) (Methylobacterium extorquens).